We begin with the raw amino-acid sequence, 361 residues long: Methylthioribose-1-phosphate isomerase (361 aa).

D245 (proton donor) is an active-site residue.

This sequence belongs to the eIF-2B alpha/beta/delta subunits family. MtnA subfamily.

Its subcellular location is the cytoplasm. It localises to the nucleus. The catalysed reaction is 5-(methylsulfanyl)-alpha-D-ribose 1-phosphate = 5-(methylsulfanyl)-D-ribulose 1-phosphate. It functions in the pathway amino-acid biosynthesis; L-methionine biosynthesis via salvage pathway; L-methionine from S-methyl-5-thio-alpha-D-ribose 1-phosphate: step 1/6. Functionally, catalyzes the interconversion of methylthioribose-1-phosphate (MTR-1-P) into methylthioribulose-1-phosphate (MTRu-1-P). The polypeptide is Methylthioribose-1-phosphate isomerase (Monosiga brevicollis (Choanoflagellate)).